Consider the following 171-residue polypeptide: MPLLDSFCVDHTIMNAPGVRLAKTMDTPKGDKICVFDLRFCKPNETMMPERGTHTLEHLFAGFMRDHLNREGVEIIDISPMGCRTGFYMSVIGEPSSQEVANAWEASMKDIINVLSQSDIPELNEYQCGSYKMHSLKEAHEIANNVLKAGIGIIDNESIKLDLHAKGLKKH.

Fe cation-binding residues include histidine 54, histidine 58, and cysteine 128.

It belongs to the LuxS family. Homodimer. The cofactor is Fe cation.

The catalysed reaction is S-(5-deoxy-D-ribos-5-yl)-L-homocysteine = (S)-4,5-dihydroxypentane-2,3-dione + L-homocysteine. Its function is as follows. Involved in the synthesis of autoinducer 2 (AI-2) which is secreted by bacteria and is used to communicate both the cell density and the metabolic potential of the environment. The regulation of gene expression in response to changes in cell density is called quorum sensing. Catalyzes the transformation of S-ribosylhomocysteine (RHC) to homocysteine (HC) and 4,5-dihydroxy-2,3-pentadione (DPD). The polypeptide is S-ribosylhomocysteine lyase (Campylobacter curvus (strain 525.92)).